Reading from the N-terminus, the 213-residue chain is FMN-dependent NADH:quinone oxidoreductase (213 aa).

FMN is bound at residue serine 10.

The protein belongs to the azoreductase type 1 family. Homodimer. FMN serves as cofactor.

It carries out the reaction 2 a quinone + NADH + H(+) = 2 a 1,4-benzosemiquinone + NAD(+). It catalyses the reaction N,N-dimethyl-1,4-phenylenediamine + anthranilate + 2 NAD(+) = 2-(4-dimethylaminophenyl)diazenylbenzoate + 2 NADH + 2 H(+). In terms of biological role, quinone reductase that provides resistance to thiol-specific stress caused by electrophilic quinones. Functionally, also exhibits azoreductase activity. Catalyzes the reductive cleavage of the azo bond in aromatic azo compounds to the corresponding amines. The sequence is that of FMN-dependent NADH:quinone oxidoreductase from Opitutus terrae (strain DSM 11246 / JCM 15787 / PB90-1).